The sequence spans 474 residues: Ribulose bisphosphate carboxylase large chain (474 aa).

Substrate contacts are provided by asparagine 122 and threonine 172. Lysine 174 acts as the Proton acceptor in catalysis. A substrate-binding site is contributed by lysine 176. Lysine 200, aspartate 202, and glutamate 203 together coordinate Mg(2+). An N6-carboxylysine modification is found at lysine 200. Histidine 293 (proton acceptor) is an active-site residue. 3 residues coordinate substrate: arginine 294, histidine 326, and serine 378.

It belongs to the RuBisCO large chain family. Type I subfamily. Heterohexadecamer of 8 large chains and 8 small chains; disulfide-linked. The disulfide link is formed within the large subunit homodimers. Requires Mg(2+) as cofactor. In terms of processing, the disulfide bond which can form in the large chain dimeric partners within the hexadecamer appears to be associated with oxidative stress and protein turnover.

Its subcellular location is the carboxysome. It carries out the reaction 2 (2R)-3-phosphoglycerate + 2 H(+) = D-ribulose 1,5-bisphosphate + CO2 + H2O. The enzyme catalyses D-ribulose 1,5-bisphosphate + O2 = 2-phosphoglycolate + (2R)-3-phosphoglycerate + 2 H(+). RuBisCO catalyzes two reactions: the carboxylation of D-ribulose 1,5-bisphosphate, the primary event in carbon dioxide fixation, as well as the oxidative fragmentation of the pentose substrate in the photorespiration process. Both reactions occur simultaneously and in competition at the same active site. In Gloeobacter violaceus (strain ATCC 29082 / PCC 7421), this protein is Ribulose bisphosphate carboxylase large chain.